The following is a 292-amino-acid chain: Ribosomal protein L11 methyltransferase (292 aa).

S-adenosyl-L-methionine contacts are provided by threonine 143, glycine 164, aspartate 186, and asparagine 228.

Belongs to the methyltransferase superfamily. PrmA family.

It localises to the cytoplasm. It carries out the reaction L-lysyl-[protein] + 3 S-adenosyl-L-methionine = N(6),N(6),N(6)-trimethyl-L-lysyl-[protein] + 3 S-adenosyl-L-homocysteine + 3 H(+). Its function is as follows. Methylates ribosomal protein L11. In Tolumonas auensis (strain DSM 9187 / NBRC 110442 / TA 4), this protein is Ribosomal protein L11 methyltransferase.